The following is a 205-amino-acid chain: Phosphoheptose isomerase (205 aa).

Positions 38 to 200 constitute an SIS domain; that stretch reads LAVRLALGSK…LFEAVGELEP (163 aa). 53-55 contributes to the substrate binding site; it reads NGG. Residues His-62 and Glu-66 each contribute to the Zn(2+) site. Substrate-binding positions include Glu-66, 95–96, 121–123, Ser-126, and Gln-173; these read ND and STS. Positions 173 and 181 each coordinate Zn(2+).

It belongs to the SIS family. GmhA subfamily. In terms of assembly, homotetramer. It depends on Zn(2+) as a cofactor.

It localises to the cytoplasm. The catalysed reaction is 2 D-sedoheptulose 7-phosphate = D-glycero-alpha-D-manno-heptose 7-phosphate + D-glycero-beta-D-manno-heptose 7-phosphate. It functions in the pathway carbohydrate biosynthesis; D-glycero-D-manno-heptose 7-phosphate biosynthesis; D-glycero-alpha-D-manno-heptose 7-phosphate and D-glycero-beta-D-manno-heptose 7-phosphate from sedoheptulose 7-phosphate: step 1/1. Functionally, catalyzes the isomerization of sedoheptulose 7-phosphate in D-glycero-D-manno-heptose 7-phosphate. The protein is Phosphoheptose isomerase of Maridesulfovibrio salexigens (strain ATCC 14822 / DSM 2638 / NCIMB 8403 / VKM B-1763) (Desulfovibrio salexigens).